The sequence spans 256 residues: Endonuclease NucS (256 aa).

A disordered region spans residues 62-97 (AAKSAQHSRESVAGGAVDGDSATHSPESVAAGEPEK).

Belongs to the NucS endonuclease family.

It is found in the cytoplasm. In terms of biological role, cleaves both 3' and 5' ssDNA extremities of branched DNA structures. This chain is Endonuclease NucS, found in Bifidobacterium longum (strain NCC 2705).